The sequence spans 127 residues: Small ribosomal subunit protein eS8 (127 aa).

The interval 1 to 31 is disordered; the sequence is MTIFQGKSGKKATGGSLKQSRKKRRFELGRE.

This sequence belongs to the eukaryotic ribosomal protein eS8 family. In terms of assembly, part of the 30S ribosomal subunit.

The polypeptide is Small ribosomal subunit protein eS8 (rps8e) (Thermoplasma acidophilum (strain ATCC 25905 / DSM 1728 / JCM 9062 / NBRC 15155 / AMRC-C165)).